Consider the following 433-residue polypeptide: Beta-agarase AgaA (433 aa).

Positions 1-20 (MRKITSILLTCVMGCTATYA) are cleaved as a signal peptide. A GH16 domain is found at 21–295 (ADWDGVPVPA…WVRFYKPVPI (275 aa)). Glu-147 acts as the Nucleophile in catalysis. Glu-152 serves as the catalytic Proton donor. Positions 300–431 (TTVELGNFHN…QWNGDEIRFV (132 aa)) constitute a CBM6 domain.

It belongs to the glycosyl hydrolase 16 family. Monomer.

Its subcellular location is the periplasm. The catalysed reaction is Hydrolysis of (1-&gt;4)-beta-D-galactosidic linkages in agarose, giving the tetramer as the predominant product.. Its activity is regulated as follows. Activity is abolished by Hg(2+), Cu(2+), Pb(2+) and Zn(2+) ions, but is not affected by NaCl up to at least 1.0 M, Mg(2+), K(+) and Ca(2+). Not affected by iodoacetamide, p-chloromercuribenzoate, dithiothreitol, 2-mercaptoethanol, EDTA and sodium dodecyl sulfate. Inhibited by N-bromosuccinimide. Endo-type beta-agarase, which produces neoagarotetraose (NA4) as the main final product, with a small amount of neoagarohexaose (NA6) and neoagarobiose (NA2). This is Beta-agarase AgaA from Microbulbifer thermotolerans.